We begin with the raw amino-acid sequence, 1155 residues long: ATP-dependent helicase/deoxyribonuclease subunit B (1155 aa).

In terms of domain architecture, UvrD-like helicase ATP-binding spans 1–278 (MSQLNAYIGR…FTKQERFENR (278 aa)). 9–16 (GRAGTGKS) lines the ATP pocket. One can recognise a UvrD-like helicase C-terminal domain in the interval 270–584 (TKQERFENRD…SIGSMDLAKV (315 aa)). [4Fe-4S] cluster contacts are provided by Cys785, Cys1112, Cys1115, and Cys1121.

The protein belongs to the helicase family. AddB/RexB type 1 subfamily. As to quaternary structure, heterodimer of AddA and AddB. The cofactor is Mg(2+). [4Fe-4S] cluster serves as cofactor.

The heterodimer acts as both an ATP-dependent DNA helicase and an ATP-dependent, dual-direction single-stranded exonuclease. Recognizes the chi site generating a DNA molecule suitable for the initiation of homologous recombination. The AddB subunit has 5' -&gt; 3' nuclease activity but not helicase activity. In Staphylococcus carnosus (strain TM300), this protein is ATP-dependent helicase/deoxyribonuclease subunit B.